Here is a 204-residue protein sequence, read N- to C-terminus: Probable molybdenum cofactor guanylyltransferase (204 aa).

GTP contacts are provided by residues 10-12, Lys22, Asp75, and Asp104; that span reads LSG. Mg(2+) is bound at residue Asp104.

The protein belongs to the MobA family. It depends on Mg(2+) as a cofactor.

Its subcellular location is the cytoplasm. The catalysed reaction is Mo-molybdopterin + GTP + H(+) = Mo-molybdopterin guanine dinucleotide + diphosphate. In terms of biological role, transfers a GMP moiety from GTP to Mo-molybdopterin (Mo-MPT) cofactor (Moco or molybdenum cofactor) to form Mo-molybdopterin guanine dinucleotide (Mo-MGD) cofactor. The polypeptide is Probable molybdenum cofactor guanylyltransferase (Methanocaldococcus jannaschii (strain ATCC 43067 / DSM 2661 / JAL-1 / JCM 10045 / NBRC 100440) (Methanococcus jannaschii)).